The sequence spans 937 residues: AP-2 complex subunit beta (937 aa).

At Thr2 the chain carries N-acetylthreonine. Residue Ser4 is modified to Phosphoserine. The residue at position 265 (Lys265) is an N6-acetyllysine. At Tyr737 the chain carries Phosphotyrosine; by SRC. An interaction with ARRB1 region spans residues 841–937 (WKDIPNENEL…YQVYDSILKN (97 aa)). At Tyr928 the chain carries Phosphotyrosine.

The protein belongs to the adaptor complexes large subunit family. In terms of assembly, adaptor protein complex 2 (AP-2) is a heterotetramer composed of two large adaptins (alpha-type subunit AP2A1 or AP2A2 and beta-type subunit AP2B1), a medium adaptin (mu-type subunit AP2M1) and a small adaptin (sigma-type subunit AP2S1). Interacts with EPN1. Interacts with EPS15; clathrin competes with EPS15. Interacts with SNAP91; clathrin competes with SNAP91. Interacts with CLTC; clathrin competes with EPS15, SNAP91 and PIP5K1C. Interacts with LDLRAP1. Interacts with AMPH and BIN1. Interacts with ARF6 (GDP-bound). Interacts (dephosphorylated at Tyr-737) with ARRB1; phosphorylation of AP2B1 at Tyr-737 disrupts the interaction. Interacts with SLC2A8. Interacts with SCYL1 and SCYL2. Interacts with TGFBR1 and TGFBR2. Interacts with PIP5K1C; clathrin competes with PIP5K1C. Interacts with DENND1B, but not with DENND1A, nor DENND1C. Interacts with FCHO1. Interacts with RFTN1. Interacts with KIAA1107. Together with AP2A1 or AP2A2 and AP2M1, it interacts with ADAM10; this interaction facilitates ADAM10 endocytosis from the plasma membrane during long-term potentiation in hippocampal neurons. Post-translationally, phosphorylation at Tyr-737 by SRC occurs at the plasma membrane in clathrin-coated vesicles (CCVs). As to expression, expressed in the brain (at protein level).

It is found in the cell membrane. Its subcellular location is the membrane. The protein localises to the coated pit. In terms of biological role, component of the adaptor protein complex 2 (AP-2). Adaptor protein complexes function in protein transport via transport vesicles in different membrane traffic pathways. Adaptor protein complexes are vesicle coat components and appear to be involved in cargo selection and vesicle formation. AP-2 is involved in clathrin-dependent endocytosis in which cargo proteins are incorporated into vesicles surrounded by clathrin (clathrin-coated vesicles, CCVs) which are destined for fusion with the early endosome. The clathrin lattice serves as a mechanical scaffold but is itself unable to bind directly to membrane components. Clathrin-associated adaptor protein (AP) complexes which can bind directly to both the clathrin lattice and to the lipid and protein components of membranes are considered to be the major clathrin adaptors contributing the CCV formation. AP-2 also serves as a cargo receptor to selectively sort the membrane proteins involved in receptor-mediated endocytosis. AP-2 seems to play a role in the recycling of synaptic vesicle membranes from the presynaptic surface. AP-2 recognizes Y-X-X-[FILMV] (Y-X-X-Phi) and [ED]-X-X-X-L-[LI] endocytosis signal motifs within the cytosolic tails of transmembrane cargo molecules. AP-2 may also play a role in maintaining normal post-endocytic trafficking through the ARF6-regulated, non-clathrin pathway. During long-term potentiation in hippocampal neurons, AP-2 is responsible for the endocytosis of ADAM10. The AP-2 beta subunit acts via its C-terminal appendage domain as a scaffolding platform for endocytic accessory proteins; at least some clathrin-associated sorting proteins (CLASPs) are recognized by their [DE]-X(1,2)-F-X-X-[FL]-X-X-X-R motif. The AP-2 beta subunit binds to clathrin heavy chain, promoting clathrin lattice assembly; clathrin displaces at least some CLASPs from AP2B1 which probably then can be positioned for further coat assembly. The sequence is that of AP-2 complex subunit beta (AP2B1) from Homo sapiens (Human).